We begin with the raw amino-acid sequence, 146 residues long: UPF0178 protein Lin1493 (146 aa).

Belongs to the UPF0178 family.

The sequence is that of UPF0178 protein Lin1493 from Listeria innocua serovar 6a (strain ATCC BAA-680 / CLIP 11262).